The sequence spans 136 residues: Peptide methionine sulfoxide reductase B5 (136 aa).

Residues 14 to 135 form the MsrB domain; sequence DEEWRAVLSP…NSVSIKFTPA (122 aa). Zn(2+) is bound by residues cysteine 53, cysteine 56, cysteine 99, and cysteine 102. Cysteine 71 and cysteine 124 are oxidised to a cystine. The active-site Nucleophile is cysteine 124.

Belongs to the MsrB Met sulfoxide reductase family. It depends on Zn(2+) as a cofactor.

The protein resides in the cytoplasm. The protein localises to the cytosol. It carries out the reaction L-methionyl-[protein] + [thioredoxin]-disulfide + H2O = L-methionyl-(R)-S-oxide-[protein] + [thioredoxin]-dithiol. Functionally, catalyzes the reduction of methionine sulfoxide (MetSO) to methionine in proteins. Plays a protective role against oxidative stress by restoring activity to proteins that have been inactivated by methionine oxidation. MSRB family specifically reduces the MetSO R-enantiomer. This chain is Peptide methionine sulfoxide reductase B5 (MSRB5), found in Oryza sativa subsp. japonica (Rice).